Here is a 410-residue protein sequence, read N- to C-terminus: Cell division protein FtsZ (410 aa).

Residues Gly-22–Asn-26, Gly-109–Gly-111, Glu-140, Arg-144, and Asp-188 each bind GTP. The segment at Glu-318 to Arg-410 is disordered. Over residues Arg-330–Glu-344 the composition is skewed to polar residues. The segment covering Trp-360–Asp-398 has biased composition (basic and acidic residues).

Belongs to the FtsZ family. As to quaternary structure, homodimer. Polymerizes to form a dynamic ring structure in a strictly GTP-dependent manner. Interacts directly with several other division proteins.

It localises to the cytoplasm. Functionally, essential cell division protein that forms a contractile ring structure (Z ring) at the future cell division site. The regulation of the ring assembly controls the timing and the location of cell division. One of the functions of the FtsZ ring is to recruit other cell division proteins to the septum to produce a new cell wall between the dividing cells. Binds GTP and shows GTPase activity. The chain is Cell division protein FtsZ from Enterococcus faecalis (strain ATCC 700802 / V583).